The following is a 107-amino-acid chain: Small ribosomal subunit protein uS17 (107 aa).

This sequence belongs to the universal ribosomal protein uS17 family. Part of the 30S ribosomal subunit.

In terms of biological role, one of the primary rRNA binding proteins, it binds specifically to the 5'-end of 16S ribosomal RNA. The polypeptide is Small ribosomal subunit protein uS17 (Thermotoga maritima (strain ATCC 43589 / DSM 3109 / JCM 10099 / NBRC 100826 / MSB8)).